The following is a 373-amino-acid chain: Trifolitoxin-processing protein TfxB (373 aa).

To E.coli McbC which is involved in the processing of microcin B17 (MCCB17).

Its subcellular location is the cytoplasm. In terms of biological role, the actions of the proteins TfxB, TfxD and TfxF are implicated in the processing of the inactive trifolitoxin (TfxA) precursor into the active peptide. In Rhizobium leguminosarum bv. trifolii, this protein is Trifolitoxin-processing protein TfxB (tfxB).